A 418-amino-acid chain; its full sequence is Torsin-4A-B (418 aa).

A helical membrane pass occupies residues 128–144; sequence CLLLFVGIVCFQIFNAI. 200–207 provides a ligand contact to ATP; it reads GPSGVGKS.

It belongs to the ClpA/ClpB family. Torsin subfamily.

Its subcellular location is the membrane. This is Torsin-4A-B (tor4a-b) from Xenopus laevis (African clawed frog).